The sequence spans 390 residues: ATP-sensitive inward rectifier potassium channel 11 (390 aa).

The Cytoplasmic portion of the chain corresponds to 1 to 65; that stretch reads MLSRKGIIPE…LQDVFTTLVD (65 aa). 2 residues coordinate ATP: N48 and R50. Residues 66 to 92 traverse the membrane as a helical segment; that stretch reads LKWTHTLLIFTMSFLCSWLLFAMVWWL. Residues 93–116 lie on the Extracellular side of the membrane; the sequence is IAFAHGDLAPGEGAAVPCVTSIHS. C110 and C142 form a disulfide bridge. The discontinuously helical; Pore-forming intramembrane region spans 117 to 133; it reads FSSAFLFSIEVQVTIGF. K(+)-binding residues include T130 and F133. The Selectivity filter motif lies at 130-135; the sequence is TIGFGG. The Extracellular portion of the chain corresponds to 134-142; it reads GGRMVTEEC. The chain crosses the membrane as a helical span at residues 143-171; the sequence is PLAILILIVQNIVGLMINAIMLGCIFMKT. Residues 172–390 are Cytoplasmic-facing; sequence AQAHRRAETL…KFSISPDSLS (219 aa). An a 1,2-diacyl-sn-glycero-3-phospho-(1D-myo-inositol-4,5-bisphosphate)-binding site is contributed by R176. Y330 serves as a coordination point for ATP. T341 carries the phosphothreonine; by MAPK1 modification. S385 carries the phosphoserine; by MAPK1 modification.

The protein belongs to the inward rectifier-type potassium channel (TC 1.A.2.1) family. KCNJ11 subfamily. As to quaternary structure, homotetramer; the homotetramer binds four ATP molecules (one ATP per subunit). Forms an heterooctamer with ABCC8/SUR1; one KCNJ11 homotetramer interacts with four ABCC8/SUR1 molecules. Interacts with ABCC9/SUR2. Post-translationally, phosphorylation by MAPK1 results in changes in channel gating that destabilize the closed states and reduce the ATP sensitivity.

The protein localises to the membrane. It carries out the reaction K(+)(in) = K(+)(out). KATP channels are regulated by cytoplasmic ATP/ADP ratios; ATP inhibits the channel by closing the pore, while ADP activates the channel. Activated by phosphatidylinositol 4,5-biphosphate (PtdIns(4,5)P2). Its function is as follows. Inward rectifier potassium channel that forms the pore of ATP-sensitive potassium channels (KATP), regulating potassium permeability as a function of cytoplasmic ATP and ADP concentrations in many different cells. Inward rectifier potassium channels are characterized by a greater tendency to allow potassium to flow into the cell rather than out of it. Their voltage dependence is regulated by the concentration of extracellular potassium; as external potassium is raised, the voltage range of the channel opening shifts to more positive voltages. The inward rectification is mainly due to the blockage of outward current by internal magnesium. Can be blocked by extracellular barium. In pancreatic cells, it forms KATP channels with ABCC8/SUR1. Can form cardiac and smooth muscle-type KATP channels with ABCC9. The chain is ATP-sensitive inward rectifier potassium channel 11 (KCNJ11) from Oryctolagus cuniculus (Rabbit).